A 310-amino-acid polypeptide reads, in one-letter code: Porphobilinogen deaminase (310 aa).

At cysteine 242 the chain carries S-(dipyrrolylmethanemethyl)cysteine.

It belongs to the HMBS family. As to quaternary structure, monomer. The cofactor is dipyrromethane.

It carries out the reaction 4 porphobilinogen + H2O = hydroxymethylbilane + 4 NH4(+). It functions in the pathway porphyrin-containing compound metabolism; protoporphyrin-IX biosynthesis; coproporphyrinogen-III from 5-aminolevulinate: step 2/4. Tetrapolymerization of the monopyrrole PBG into the hydroxymethylbilane pre-uroporphyrinogen in several discrete steps. This chain is Porphobilinogen deaminase, found in Psychromonas ingrahamii (strain DSM 17664 / CCUG 51855 / 37).